A 502-amino-acid polypeptide reads, in one-letter code: Aspartyl/glutamyl-tRNA(Asn/Gln) amidotransferase subunit B (502 aa).

The disordered stretch occupies residues 272–293 (TRHWHEDTRSTTSGRPKSDADD).

The protein belongs to the GatB/GatE family. GatB subfamily. As to quaternary structure, heterotrimer of A, B and C subunits.

It carries out the reaction L-glutamyl-tRNA(Gln) + L-glutamine + ATP + H2O = L-glutaminyl-tRNA(Gln) + L-glutamate + ADP + phosphate + H(+). It catalyses the reaction L-aspartyl-tRNA(Asn) + L-glutamine + ATP + H2O = L-asparaginyl-tRNA(Asn) + L-glutamate + ADP + phosphate + 2 H(+). In terms of biological role, allows the formation of correctly charged Asn-tRNA(Asn) or Gln-tRNA(Gln) through the transamidation of misacylated Asp-tRNA(Asn) or Glu-tRNA(Gln) in organisms which lack either or both of asparaginyl-tRNA or glutaminyl-tRNA synthetases. The reaction takes place in the presence of glutamine and ATP through an activated phospho-Asp-tRNA(Asn) or phospho-Glu-tRNA(Gln). The chain is Aspartyl/glutamyl-tRNA(Asn/Gln) amidotransferase subunit B from Paenarthrobacter aurescens (strain TC1).